A 360-amino-acid polypeptide reads, in one-letter code: Phenylalanine--tRNA ligase alpha subunit (360 aa).

Glu-260 lines the Mg(2+) pocket.

Belongs to the class-II aminoacyl-tRNA synthetase family. Phe-tRNA synthetase alpha subunit type 1 subfamily. Tetramer of two alpha and two beta subunits. Requires Mg(2+) as cofactor.

The protein localises to the cytoplasm. The catalysed reaction is tRNA(Phe) + L-phenylalanine + ATP = L-phenylalanyl-tRNA(Phe) + AMP + diphosphate + H(+). In Rhodopseudomonas palustris (strain ATCC BAA-98 / CGA009), this protein is Phenylalanine--tRNA ligase alpha subunit.